The following is a 118-amino-acid chain: Non-specific lipid-transfer protein D (118 aa).

The N-terminal stretch at 1–25 (MAGLMKLACLIFACMIVAGPITSNA) is a signal peptide. Cystine bridges form between Cys29–Cys77, Cys39–Cys54, Cys55–Cys100, and Cys75–Cys114.

This sequence belongs to the plant LTP family.

Functionally, plant non-specific lipid-transfer proteins transfer phospholipids as well as galactolipids across membranes. May play a role in wax or cutin deposition in the cell walls of expanding epidermal cells and certain secretory tissues. The sequence is that of Non-specific lipid-transfer protein D (WAX9D) from Brassica oleracea var. italica (Broccoli).